Consider the following 151-residue polypeptide: Large ribosomal subunit protein bL9 (151 aa).

Belongs to the bacterial ribosomal protein bL9 family.

Binds to the 23S rRNA. The polypeptide is Large ribosomal subunit protein bL9 (Dehalococcoides mccartyi (strain ATCC BAA-2100 / JCM 16839 / KCTC 5957 / BAV1)).